Consider the following 168-residue polypeptide: Protein OPG162 (168 aa).

Topologically, residues 1–14 are intravirion; that stretch reads MKSLNRQTVSRFKK. A helical transmembrane segment spans residues 15–37; sequence LSVPAAIMMILSTIISGIGTFLH. Topologically, residues 38–168 are virion surface; sequence YKEELMPSAC…SVLCVKRFYK (131 aa). The C-type lectin domain maps to 54 to 163; sequence YDKHCYLDTN…CKSTQSVLCV (110 aa). 2 disulfide bridges follow: Cys-75-Cys-162 and Cys-141-Cys-154. Residue Asn-133 is glycosylated (N-linked (GlcNAc...) asparagine; by host).

The protein belongs to the orthopoxvirus OPG162 protein family. In terms of assembly, interacts with protein OPG161. Interacts with protein OPG164. Interacts with protein OPG190.

The protein localises to the virion membrane. It localises to the host Golgi apparatus. Forms a complex with OPG162 and OPG190 to coordinate the incorporation of OPG164 into wrapped enveloped virion (EV) membranes and, subsequently, the production of actin tails. Therefore plays an essential role in efficient cell-to-cell spread of viral particles. This Variola virus (isolate Human/India/Ind3/1967) (VARV) protein is Protein OPG162 (OPG162).